Reading from the N-terminus, the 217-residue chain is Secreted RxLR effector protein 147 (217 aa).

The N-terminal stretch at 1–23 (MRGAFYVTTALLITNSIRTAAEA) is a signal peptide. The tract at residues 22-52 (EANPPGRQPMSHHDGVVPGKSSPRRFLQGSH) is disordered. The RxLR-dEER signature appears at 46–67 (RFLQGSHEPHDKFAVSAANEER).

It belongs to the RxLR effector family.

It is found in the secreted. The protein localises to the host nucleus. Its subcellular location is the host cytoplasm. Functionally, secreted effector that completely suppresses the host cell death induced by cell death-inducing proteins. The polypeptide is Secreted RxLR effector protein 147 (Plasmopara viticola (Downy mildew of grapevine)).